Reading from the N-terminus, the 245-residue chain is Major prion protein (245 aa).

Residues 1–22 (MANLGCWMLVVFVATWSDLGLC) form the signal peptide. Residues 23 to 222 (KKRPKPGGWN…ESQAYYQRGS (200 aa)) form an interaction with GRB2, ERI3 and SYN1 region. Residues 25–102 (RPKPGGWNTG…KPSKPKTSMK (78 aa)) are disordered. 4 tandem repeats follow at residues 51 to 59 (PQGGGGWGQ), 60 to 67 (PHGGGWGQ), 68 to 75 (PHGGGWGQ), and 76 to 83 (PHGGGWGQ). The segment at 51–83 (PQGGGGWGQPHGGGWGQPHGGGWGQPHGGGWGQ) is 4 X 8 AA tandem repeats of P-H-G-G-G-W-G-Q. Residues 52–87 (QGGGGWGQPHGGGWGQPHGGGWGQPHGGGWGQGGGT) are compositionally biased toward gly residues. Positions 54, 55, 61, 62, 63, 69, 70, 71, 77, 78, and 79 each coordinate Cu(2+). The span at 90–101 (QWHKPSKPKTSM) shows a compositional bias: basic residues. A disulfide bridge connects residues C171 and C206. Residues N173 and N189 are each glycosylated (N-linked (GlcNAc...) asparagine). The GPI-anchor amidated serine moiety is linked to residue S222. Positions 223–245 (SMVLFSSPPVILLISFLIFLIVG) are cleaved as a propeptide — removed in mature form.

This sequence belongs to the prion family. In terms of assembly, monomer and homodimer. Has a tendency to aggregate into amyloid fibrils containing a cross-beta spine, formed by a steric zipper of superposed beta-strands. Soluble oligomers may represent an intermediate stage on the path to fibril formation. Copper binding may promote oligomerization. Interacts with GRB2, APP, ERI3/PRNPIP and SYN1. Mislocalized cytosolically exposed PrP interacts with MGRN1; this interaction alters MGRN1 subcellular location and causes lysosomal enlargement. Interacts with KIAA1191.

It is found in the cell membrane. The protein localises to the golgi apparatus. Its primary physiological function is unclear. Has cytoprotective activity against internal or environmental stresses. May play a role in neuronal development and synaptic plasticity. May be required for neuronal myelin sheath maintenance. May play a role in iron uptake and iron homeostasis. Soluble oligomers are toxic to cultured neuroblastoma cells and induce apoptosis (in vitro). Association with GPC1 (via its heparan sulfate chains) targets PRNP to lipid rafts. Also provides Cu(2+) or Zn(2+) for the ascorbate-mediated GPC1 deaminase degradation of its heparan sulfate side chains. The sequence is that of Major prion protein (PRNP) from Cercopithecus diana (Diana monkey).